A 194-amino-acid chain; its full sequence is NADH-quinone oxidoreductase subunit B (194 aa).

The interval 1–26 (MGLTPSATKPEIAQAPQGIVDPSTGR) is disordered. Residues C73, C74, C138, and C168 each contribute to the [4Fe-4S] cluster site.

Belongs to the complex I 20 kDa subunit family. NDH-1 is composed of 14 different subunits. Subunits NuoB, C, D, E, F, and G constitute the peripheral sector of the complex. The cofactor is [4Fe-4S] cluster.

It localises to the cell inner membrane. It carries out the reaction a quinone + NADH + 5 H(+)(in) = a quinol + NAD(+) + 4 H(+)(out). Its function is as follows. NDH-1 shuttles electrons from NADH, via FMN and iron-sulfur (Fe-S) centers, to quinones in the respiratory chain. The immediate electron acceptor for the enzyme in this species is believed to be ubiquinone. Couples the redox reaction to proton translocation (for every two electrons transferred, four hydrogen ions are translocated across the cytoplasmic membrane), and thus conserves the redox energy in a proton gradient. In Xanthobacter autotrophicus (strain ATCC BAA-1158 / Py2), this protein is NADH-quinone oxidoreductase subunit B.